Consider the following 428-residue polypeptide: Chaperone SurA (428 aa).

The signal sequence occupies residues 1–20 (MKNWKTLLLGIAMIANTSFA). 2 consecutive PpiC domains span residues 171–272 (STEL…KVND) and 282–382 (VTEV…ELLD).

Its subcellular location is the periplasm. The catalysed reaction is [protein]-peptidylproline (omega=180) = [protein]-peptidylproline (omega=0). In terms of biological role, chaperone involved in the correct folding and assembly of outer membrane proteins. Recognizes specific patterns of aromatic residues and the orientation of their side chains, which are found more frequently in integral outer membrane proteins. May act in both early periplasmic and late outer membrane-associated steps of protein maturation. This is Chaperone SurA from Salmonella choleraesuis (strain SC-B67).